The following is a 195-amino-acid chain: HTH-type transcriptional regulator BetI (195 aa).

The HTH tetR-type domain maps to 8 to 68 (SIRRRQLIDA…ATMRDITSQL (61 aa)). Residues 31–50 (TIAQIARRAGVSTGIISHYF) constitute a DNA-binding region (H-T-H motif).

The protein operates within amine and polyamine biosynthesis; betaine biosynthesis via choline pathway [regulation]. Its function is as follows. Repressor involved in the biosynthesis of the osmoprotectant glycine betaine. It represses transcription of the choline transporter BetT and the genes of BetAB involved in the synthesis of glycine betaine. This Escherichia coli (strain K12 / DH10B) protein is HTH-type transcriptional regulator BetI.